A 276-amino-acid polypeptide reads, in one-letter code: MELPDIPFPITSPDDFYDDPCFNTSDMHFFEDLDPRLVHVGLLKPDDHHHKEDEHIRAPSGHHQAGRCLLWACKACKRKTTNADRRKAATMRERRRLSKVNDAFETLKRCTSTNPNQRLPKVDILRNAISYIESLQGLLRGAGQEGNYYPVMDHYSGDSDASSPRSNCSDGMMDFNGQSCPPRRRNKYDSTYFNEAPNDSRHKKNSVISSLDCLSNIVERITTDTSACPAVQDGSEGSSPCSPGDGSIASENGAPIPSPINCVPALHDPNTIYQVL.

Residues 84–135 form the bHLH domain; sequence DRRKAATMRERRRLSKVNDAFETLKRCTSTNPNQRLPKVDILRNAISYIESL. A disordered region spans residues 228 to 253; that stretch reads CPAVQDGSEGSSPCSPGDGSIASENG.

Efficient DNA binding requires dimerization with another bHLH protein.

It localises to the nucleus. In terms of biological role, may act as a transcriptional activator that promotes transcription of muscle-specific target genes and plays a role in muscle differentiation. This Oncorhynchus mykiss (Rainbow trout) protein is Myoblast determination protein 1 homolog 1 (myod1).